The primary structure comprises 468 residues: uncharacterized protein (468 aa).

6 helical membrane passes run I59–I79, T135–V155, V215–L235, T297–V317, H348–Y368, and V385–F405.

It localises to the membrane. This is an uncharacterized protein from Caenorhabditis elegans.